The sequence spans 348 residues: UDP-glucose 4-epimerase (348 aa).

Residues 12 to 14, 33 to 37, 66 to 67, Phe88, and Lys92 contribute to the NAD(+) site; these read GYI, DNFHN, and DI. 132–134 is a substrate binding site; it reads SAT. The active-site Proton acceptor is Tyr157. Residues Lys161 and Tyr185 each contribute to the NAD(+) site. Substrate-binding positions include 185-187, 206-208, 224-226, Arg239, and 300-303; these read YFN, NNL, NVF, and REGD.

It belongs to the NAD(P)-dependent epimerase/dehydratase family. Homodimer. NAD(+) serves as cofactor.

The enzyme catalyses UDP-alpha-D-glucose = UDP-alpha-D-galactose. It catalyses the reaction UDP-N-acetyl-alpha-D-glucosamine = UDP-N-acetyl-alpha-D-galactosamine. It functions in the pathway carbohydrate metabolism; galactose metabolism. Functionally, catalyzes two distinct but analogous reactions: the reversible epimerization of UDP-glucose to UDP-galactose and the reversible epimerization of UDP-N-acetylglucosamine to UDP-N-acetylgalactosamine. The reaction with UDP-Gal plays a critical role in the Leloir pathway of galactose catabolism in which galactose is converted to the glycolytic intermediate glucose 6-phosphate. It contributes to the catabolism of dietary galactose and enables the endogenous biosynthesis of both UDP-Gal and UDP-GalNAc when exogenous sources are limited. Both UDP-sugar interconversions are important in the synthesis of glycoproteins and glycolipids. This Pongo abelii (Sumatran orangutan) protein is UDP-glucose 4-epimerase (GALE).